The following is a 104-amino-acid chain: Turripeptide OL55-like (104 aa).

In terms of processing, contains 8 disulfide bonds. Expressed by the venom duct.

The protein resides in the secreted. Its function is as follows. Acts as a neurotoxin by inhibiting an ion channel. The protein is Turripeptide OL55-like of Iotyrris cingulifera (Sea snail).